The chain runs to 248 residues: 3-deoxy-manno-octulosonate cytidylyltransferase (248 aa).

Belongs to the KdsB family.

It is found in the cytoplasm. The enzyme catalyses 3-deoxy-alpha-D-manno-oct-2-ulosonate + CTP = CMP-3-deoxy-beta-D-manno-octulosonate + diphosphate. Its pathway is nucleotide-sugar biosynthesis; CMP-3-deoxy-D-manno-octulosonate biosynthesis; CMP-3-deoxy-D-manno-octulosonate from 3-deoxy-D-manno-octulosonate and CTP: step 1/1. The protein operates within bacterial outer membrane biogenesis; lipopolysaccharide biosynthesis. Its function is as follows. Activates KDO (a required 8-carbon sugar) for incorporation into bacterial lipopolysaccharide in Gram-negative bacteria. This is 3-deoxy-manno-octulosonate cytidylyltransferase from Alteromonas mediterranea (strain DSM 17117 / CIP 110805 / LMG 28347 / Deep ecotype).